A 271-amino-acid chain; its full sequence is Energy-coupling factor transporter ATP-binding protein EcfA (271 aa).

The region spanning 2 to 231 is the ABC transporter domain; that stretch reads ISIQNLTFYY…PLFLQQYKLN (230 aa). Position 34-41 (34-41) interacts with ATP; the sequence is GHNGSGKS.

It belongs to the ABC transporter superfamily. Energy-coupling factor EcfA family. In terms of assembly, forms a stable energy-coupling factor (ECF) transporter complex composed of 2 membrane-embedded substrate-binding proteins (S component), 2 ATP-binding proteins (A component) and 2 transmembrane proteins (T component).

It is found in the cell membrane. Functionally, ATP-binding (A) component of a common energy-coupling factor (ECF) ABC-transporter complex. Unlike classic ABC transporters this ECF transporter provides the energy necessary to transport a number of different substrates. The sequence is that of Energy-coupling factor transporter ATP-binding protein EcfA from Onion yellows phytoplasma (strain OY-M).